The primary structure comprises 259 residues: MQESLTSGSSASLNIHDKRFAALYELGGKITELFAKELISQSGLPWSSQEPLVVLDNACGTGAVSSVLHHTIGNDKKANWHLTCGDKSEDMLHYTRQKMLQEEWHNAEVKIVNAQDTRLPSAHFTHIFTAFAIWVCTLSAAITNLSGDLPAPSEKEIHGVYNVGWDEEASVRAKFEQAGFNDIKVRKVIKEYLVPVNQFVESCTILIPTIVNIFWTQDQRDQYESELPMAVHRYVEGKYGRDGMASMEAEAIIATGHKH.

This sequence belongs to the class I-like SAM-binding methyltransferase superfamily.

Its pathway is secondary metabolite biosynthesis. Methyltransferase; part of the gene cluster that mediates the biosynthesis of aflavarin, a bicoumarin that exhibits anti-insectan activity against the fungivorous beetle C.hemipterus. In Aspergillus flavus (strain ATCC 200026 / FGSC A1120 / IAM 13836 / NRRL 3357 / JCM 12722 / SRRC 167), this protein is Methyltransferase afvD.